Reading from the N-terminus, the 804-residue chain is Cyclic di-GMP-binding protein (804 aa).

A signal peptide spans 1 to 18 (MKMVSLIALLVFATGAQA). Residues 19–766 (APIASKAPAH…DWYMHNHPFR (748 aa)) lie on the Periplasmic side of the membrane. Positions 24–69 (KAPAHQPTGSDLPPLPAAAPVAPAAQPSAQAVDPASAAPASDAGSA) are disordered. A helical transmembrane segment spans residues 767–787 (VIVVGLVGCLLVVAVLVRALF). The Cytoplasmic segment spans residues 788-804 (RHAMFRRRQLQEERQKS).

This sequence belongs to the AcsB/BcsB family. As to quaternary structure, tightly associated with the cellulose synthase catalytic subunit.

It localises to the cell inner membrane. It participates in glycan metabolism; bacterial cellulose biosynthesis. Its function is as follows. Binds the cellulose synthase activator, bis-(3'-5') cyclic diguanylic acid (c-di-GMP). The polypeptide is Cyclic di-GMP-binding protein (bcsBI) (Komagataeibacter xylinus (Gluconacetobacter xylinus)).